Consider the following 403-residue polypeptide: Argininosuccinate synthase (403 aa).

A8–S16 is an ATP binding site. L-citrulline is bound at residue Y87. Residue G117 coordinates ATP. Residues T119, N123, and D124 each contribute to the L-aspartate site. Residue N123 coordinates L-citrulline. 4 residues coordinate L-citrulline: R127, S175, E259, and Y271.

Belongs to the argininosuccinate synthase family. Type 1 subfamily. In terms of assembly, homotetramer.

It localises to the cytoplasm. It catalyses the reaction L-citrulline + L-aspartate + ATP = 2-(N(omega)-L-arginino)succinate + AMP + diphosphate + H(+). Its pathway is amino-acid biosynthesis; L-arginine biosynthesis; L-arginine from L-ornithine and carbamoyl phosphate: step 2/3. In Salinispora arenicola (strain CNS-205), this protein is Argininosuccinate synthase.